A 353-amino-acid polypeptide reads, in one-letter code: Homeobox protein Mohawk (353 aa).

Residues 18–27 (RGTPDRERGS) are compositionally biased toward basic and acidic residues. The interval 18-50 (RGTPDRERGSRTFSGFLDNPHTGPEVGIPDGPP) is disordered. Positions 71–132 (VRHKRQALQD…NARRRLKNTV (62 aa)) form a DNA-binding region, homeobox; TALE-type. 2 disordered regions span residues 157 to 183 (LSVSSDGDSCSEDGENPPRNHMNEEGY) and 243 to 302 (MGKT…PSKD).

This sequence belongs to the TALE/IRO homeobox family.

It is found in the nucleus. May act as a morphogenetic regulator of cell adhesion. Participates in the early events that lead to differentiation. This is Homeobox protein Mohawk (Mkx) from Mus musculus (Mouse).